Reading from the N-terminus, the 251-residue chain is GTP cyclohydrolase 1 type 2 homolog (251 aa).

5 residues coordinate a divalent metal cation: H64, H65, D102, H219, and E223.

Belongs to the GTP cyclohydrolase I type 2/NIF3 family. As to quaternary structure, homohexamer.

This chain is GTP cyclohydrolase 1 type 2 homolog, found in Chlamydia muridarum (strain MoPn / Nigg).